Consider the following 940-residue polypeptide: UvrABC system protein A (940 aa).

Residue G31–S38 participates in ATP binding. A C4-type zinc finger spans residues C253 to C280. 2 consecutive ABC transporter domains span residues W310–L587 and A607–K937. G640–S647 contributes to the ATP binding site. A C4-type zinc finger spans residues C740 to C766.

It belongs to the ABC transporter superfamily. UvrA family. In terms of assembly, forms a heterotetramer with UvrB during the search for lesions.

It is found in the cytoplasm. Its function is as follows. The UvrABC repair system catalyzes the recognition and processing of DNA lesions. UvrA is an ATPase and a DNA-binding protein. A damage recognition complex composed of 2 UvrA and 2 UvrB subunits scans DNA for abnormalities. When the presence of a lesion has been verified by UvrB, the UvrA molecules dissociate. In terms of biological role, plays a role in recovery after DNA ADP-ribosylation. The polypeptide is UvrABC system protein A (Escherichia coli O127:H6 (strain E2348/69 / EPEC)).